A 364-amino-acid polypeptide reads, in one-letter code: Protein-glutamate methylesterase/protein-glutamine glutaminase (364 aa).

One can recognise a Response regulatory domain in the interval 7–124; the sequence is RALIVDDSAL…SQNMPDMAEE (118 aa). A 4-aspartylphosphate modification is found at aspartate 58. Positions 167–364 constitute a CheB-type methylesterase domain; that stretch reads ETTSFVRNVL…MAEEIVKIIS (198 aa). Catalysis depends on residues serine 181, histidine 208, and aspartate 308.

The protein belongs to the CheB family. Post-translationally, phosphorylated by CheA. Phosphorylation of the N-terminal regulatory domain activates the methylesterase activity.

It is found in the cytoplasm. It carries out the reaction [protein]-L-glutamate 5-O-methyl ester + H2O = L-glutamyl-[protein] + methanol + H(+). It catalyses the reaction L-glutaminyl-[protein] + H2O = L-glutamyl-[protein] + NH4(+). Functionally, involved in chemotaxis. Part of a chemotaxis signal transduction system that modulates chemotaxis in response to various stimuli. Catalyzes the demethylation of specific methylglutamate residues introduced into the chemoreceptors (methyl-accepting chemotaxis proteins or MCP) by CheR. Also mediates the irreversible deamidation of specific glutamine residues to glutamic acid. This Methanosarcina barkeri (strain Fusaro / DSM 804) protein is Protein-glutamate methylesterase/protein-glutamine glutaminase.